Reading from the N-terminus, the 170-residue chain is Non-specific lipid transfer protein GPI-anchored 5 (170 aa).

A signal peptide spans 1–24; sequence MKMEMGLVFLTVFMAVMSSTMVSA. Intrachain disulfides connect C28/C69, C38/C53, C54/C95, and C67/C105. Residues N45, N84, N124, and N130 are each glycosylated (N-linked (GlcNAc...) asparagine). A disordered region spans residues 105 to 148; sequence CNTGGGGGGSTSDSPAESPNSSGPGNGSKTVPVGEGDGPPSSDG. A lipid anchor (GPI-anchor amidated serine) is attached at S146. A propeptide spans 147 to 170 (removed in mature form); that stretch reads DGSSIKFSFPLIAFFSAVSYMAIF.

This sequence belongs to the plant LTP family. In terms of tissue distribution, expressed in seedlings, preferentially in the endodermis of hypocotyls and roots, as well as in anthers, sepals and flower tori.

It localises to the cell membrane. Its function is as follows. Lipid transfer protein involved in seed and ovule maturation and development, probably by regulating the fatty acids homeostasis during suberin and sporopollenin biosynthesis or deposition. Contributes to pre-invasive defense against some non-host powdery mildew pathogens by preventing the penetration of the epidermal cell wall by the fungal agents (e.g. Blumeria graminis f. sp. hordei (Bgh)). The chain is Non-specific lipid transfer protein GPI-anchored 5 from Arabidopsis thaliana (Mouse-ear cress).